A 72-amino-acid chain; its full sequence is Small ribosomal subunit protein bS20 (72 aa).

Belongs to the bacterial ribosomal protein bS20 family.

Binds directly to 16S ribosomal RNA. The sequence is that of Small ribosomal subunit protein bS20 (rpsT) from Aeromonas hydrophila.